Reading from the N-terminus, the 90-residue chain is Small ribosomal subunit protein bS18 (90 aa).

This sequence belongs to the bacterial ribosomal protein bS18 family. As to quaternary structure, part of the 30S ribosomal subunit. Forms a tight heterodimer with protein bS6.

In terms of biological role, binds as a heterodimer with protein bS6 to the central domain of the 16S rRNA, where it helps stabilize the platform of the 30S subunit. This Porphyromonas gingivalis (strain ATCC 33277 / DSM 20709 / CIP 103683 / JCM 12257 / NCTC 11834 / 2561) protein is Small ribosomal subunit protein bS18.